A 622-amino-acid polypeptide reads, in one-letter code: Chaperone protein HtpG (622 aa).

Residues 1–334 (MKGQETRGFQ…SNDLPLNVSR (334 aa)) form an a; substrate-binding region. The tract at residues 335–550 (EILQDSRITQ…ADEMSTQMAK (216 aa)) is b. The c stretch occupies residues 551–622 (LFAAAGQQAP…IRRMNQLLTA (72 aa)).

Belongs to the heat shock protein 90 family. Homodimer.

It is found in the cytoplasm. Molecular chaperone. Has ATPase activity. This Yersinia pestis protein is Chaperone protein HtpG.